The following is a 531-amino-acid chain: Serine protease gd (531 aa).

An N-terminal signal peptide occupies residues methionine 1–alanine 19. Residues proline 155–glutamine 174 form a disordered region. Residues isoleucine 246–isoleucine 531 form the Peptidase S1 domain. A glycan (N-linked (GlcNAc...) asparagine) is linked at asparagine 272. Cysteine 280 and cysteine 296 are disulfide-bonded. Catalysis depends on charge relay system residues histidine 295 and aspartate 350. Residues asparagine 397 and asparagine 445 are each glycosylated (N-linked (GlcNAc...) asparagine). The cysteines at positions 432 and 449 are disulfide-linked. Serine 471 acts as the Charge relay system in catalysis.

This sequence belongs to the peptidase S1 family. Proteolytically activated by the protease ndl. Expression begins in previtellogenic stages and is seen in germline-derived nurse cells of the germarium. Expression continues throughout oogenesis with transcripts from the nurse cells accumulating in the oocytes. Most abundant in the ovaries, the level of protein decreases from the moment of egg laying and is essentially gone by 4 hours.

It localises to the secreted. Functionally, component of the extracellular signaling pathway that establishes the dorsal-ventral pathway of the embryo. A protease cascade involving ndl, gd, snk and ea results in activation of the spz Toll receptor ligand; acts downstream of ndl but upstream of snk and ea. Activation of ea requires activation of the ndl-gd-snk protease cascade and sulfation of a vitelline membrane component by pip. Localized activation of the Toll receptor in the ventral region of the embryo defines cell identities along the dorsal-ventral continuum. This is Serine protease gd from Drosophila melanogaster (Fruit fly).